Consider the following 224-residue polypeptide: Lipoprotein-releasing system ATP-binding protein LolD (224 aa).

In terms of domain architecture, ABC transporter spans 6 to 224; the sequence is VRLRELRRSF…VVRLHEGVLE (219 aa). Residue 42 to 49 participates in ATP binding; it reads GPSGSGKS.

This sequence belongs to the ABC transporter superfamily. Lipoprotein translocase (TC 3.A.1.125) family. In terms of assembly, the complex is composed of two ATP-binding proteins (LolD) and two transmembrane proteins (LolC and LolE).

It is found in the cell inner membrane. Its function is as follows. Part of the ABC transporter complex LolCDE involved in the translocation of mature outer membrane-directed lipoproteins, from the inner membrane to the periplasmic chaperone, LolA. Responsible for the formation of the LolA-lipoprotein complex in an ATP-dependent manner. In Novosphingobium aromaticivorans (strain ATCC 700278 / DSM 12444 / CCUG 56034 / CIP 105152 / NBRC 16084 / F199), this protein is Lipoprotein-releasing system ATP-binding protein LolD.